The primary structure comprises 459 residues: Argininosuccinate lyase (459 aa).

It belongs to the lyase 1 family. Argininosuccinate lyase subfamily.

It localises to the cytoplasm. It carries out the reaction 2-(N(omega)-L-arginino)succinate = fumarate + L-arginine. It functions in the pathway amino-acid biosynthesis; L-arginine biosynthesis; L-arginine from L-ornithine and carbamoyl phosphate: step 3/3. In Geobacillus sp. (strain WCH70), this protein is Argininosuccinate lyase.